We begin with the raw amino-acid sequence, 192 residues long: Secreted and transmembrane protein 1A (192 aa).

A signal peptide spans 1-27; sequence MMTCPSVPAIPTLWLFSILLLVVSLNA. The Extracellular portion of the chain corresponds to 28–165; sequence QNKSWDNPIC…SSPIEGKPGT (138 aa). N-linked (GlcNAc...) asparagine glycans are attached at residues Asn-29, Asn-55, Asn-84, and Asn-127. The chain crosses the membrane as a helical span at residues 166 to 186; the sequence is LVGVITVIFILGVAGFITFIY. Topologically, residues 187-192 are cytoplasmic; the sequence is YRHRRS.

It belongs to the SECTM family.

It localises to the cell membrane. The protein localises to the secreted. The sequence is that of Secreted and transmembrane protein 1A from Mus musculus (Mouse).